We begin with the raw amino-acid sequence, 276 residues long: uncharacterized protein (276 aa).

The disordered stretch occupies residues 1 to 70 (MSKAKSPIKS…SDDDEEDSPN (70 aa)). Over residues 21–35 (VLREKKVKDAEKAEH) the composition is skewed to basic and acidic residues. Positions 105-183 (GVLYVGRLPH…KLLQCKVIPE (79 aa)) constitute an RRM domain. The disordered stretch occupies residues 249-276 (VSHPKAASPVASKKSSKKKNKKVLAAHK). The segment covering 252 to 261 (PKAASPVASK) has biased composition (low complexity). Positions 262 to 276 (KSSKKKNKKVLAAHK) are enriched in basic residues.

It localises to the nucleus. The protein localises to the nucleolus. This is an uncharacterized protein from Schizosaccharomyces pombe (strain 972 / ATCC 24843) (Fission yeast).